The following is a 213-amino-acid chain: MLTVAMPKGRIFSEALALLKQAGYDIPDDLEHSRKLMIDVPSEQLRFILAKPMDVVTYVEHGVADVGIAGKDVLLEEERDVYEMLDLRISPCYLAVAGLPNTHVHPIAPRVATKYPNIASTYFREQGEQVEIIKLNGSVELAPLIGLAERIVDIVSTGRTLKENGLVELERIVDVTSRFIVNPVSYRMQDRAIERMVDRLTYAIEKVGENDEN.

This sequence belongs to the ATP phosphoribosyltransferase family. Short subfamily. In terms of assembly, heteromultimer composed of HisG and HisZ subunits.

The protein resides in the cytoplasm. It catalyses the reaction 1-(5-phospho-beta-D-ribosyl)-ATP + diphosphate = 5-phospho-alpha-D-ribose 1-diphosphate + ATP. The protein operates within amino-acid biosynthesis; L-histidine biosynthesis; L-histidine from 5-phospho-alpha-D-ribose 1-diphosphate: step 1/9. Its function is as follows. Catalyzes the condensation of ATP and 5-phosphoribose 1-diphosphate to form N'-(5'-phosphoribosyl)-ATP (PR-ATP). Has a crucial role in the pathway because the rate of histidine biosynthesis seems to be controlled primarily by regulation of HisG enzymatic activity. The sequence is that of ATP phosphoribosyltransferase from Anoxybacillus flavithermus (strain DSM 21510 / WK1).